The primary structure comprises 284 residues: CBY1-interacting BAR domain-containing protein 1-A (284 aa).

A mitochondrion-targeting transit peptide spans Met-1–Lys-48. The segment at Asp-11–Val-221 is BAR-like. 2 coiled-coil regions span residues Arg-142–Leu-184 and Asn-260–Asn-284. Positions Ser-242 to Arg-261 are enriched in polar residues. The interval Ser-242–Asn-284 is disordered. Residues Glu-267–Asn-284 show a composition bias toward acidic residues.

This sequence belongs to the CIBAR family.

The protein resides in the cytoplasm. It is found in the cytoskeleton. Its subcellular location is the microtubule organizing center. It localises to the centrosome. The protein localises to the centriole. The protein resides in the nucleus. It is found in the mitochondrion inner membrane. Its subcellular location is the cell projection. It localises to the cilium. The protein localises to the flagellum. In terms of biological role, plays a critical role in regulating mitochondrial ultrastructure and function by maintaining the integrity of mitochondrial morphology, particularly the organization of cristae. Plays a crucial role in ciliogenesis. Plays a key role in the correct positioning of the annulus, a septin-based ring structure in the sperm flagellum, serving both as a physical barrier and a membrane diffusion barrier that separates the midpiece (MP) from the principal piece (PP). The chain is CBY1-interacting BAR domain-containing protein 1-A from Xenopus laevis (African clawed frog).